The following is a 298-amino-acid chain: Exosome complex component Rrp4 (298 aa).

An S1 motif domain is found at 63–131 (GDVVIGKIKD…EVKKVKLGLK (69 aa)). The region spanning 139-197 (RGGIIVDITPTKVPRLIGKKGSMINMIKDKTNCKIIVGQNGLVWVKGEEDMEQLTKDII) is the KH domain. Residues 276 to 298 (KNKKDKPLSYGNNSGNSYILNNR) form a disordered region. Residues 285–298 (YGNNSGNSYILNNR) show a composition bias toward polar residues.

It belongs to the RRP4 family. As to quaternary structure, component of the archaeal exosome complex. Forms a trimer of Rrp4 and/or Csl4 subunits. The trimer associates with a hexameric ring-like arrangement composed of 3 Rrp41-Rrp42 heterodimers.

It localises to the cytoplasm. Its function is as follows. Non-catalytic component of the exosome, which is a complex involved in RNA degradation. Increases the RNA binding and the efficiency of RNA degradation. Confers strong poly(A) specificity to the exosome. The protein is Exosome complex component Rrp4 of Methanobrevibacter smithii (strain ATCC 35061 / DSM 861 / OCM 144 / PS).